A 369-amino-acid polypeptide reads, in one-letter code: Anhydro-N-acetylmuramic acid kinase (369 aa).

Position 12-19 (12-19) interacts with ATP; the sequence is GTSMDGID.

The protein belongs to the anhydro-N-acetylmuramic acid kinase family.

The catalysed reaction is 1,6-anhydro-N-acetyl-beta-muramate + ATP + H2O = N-acetyl-D-muramate 6-phosphate + ADP + H(+). It participates in amino-sugar metabolism; 1,6-anhydro-N-acetylmuramate degradation. The protein operates within cell wall biogenesis; peptidoglycan recycling. In terms of biological role, catalyzes the specific phosphorylation of 1,6-anhydro-N-acetylmuramic acid (anhMurNAc) with the simultaneous cleavage of the 1,6-anhydro ring, generating MurNAc-6-P. Is required for the utilization of anhMurNAc either imported from the medium or derived from its own cell wall murein, and thus plays a role in cell wall recycling. In Shewanella sediminis (strain HAW-EB3), this protein is Anhydro-N-acetylmuramic acid kinase.